We begin with the raw amino-acid sequence, 179 residues long: ATP-dependent protease subunit HslV (179 aa).

Threonine 5 is a catalytic residue. Na(+)-binding residues include cysteine 164 and threonine 167.

It belongs to the peptidase T1B family. HslV subfamily. As to quaternary structure, a double ring-shaped homohexamer of HslV is capped on each side by a ring-shaped HslU homohexamer. The assembly of the HslU/HslV complex is dependent on binding of ATP.

It localises to the cytoplasm. It carries out the reaction ATP-dependent cleavage of peptide bonds with broad specificity.. With respect to regulation, allosterically activated by HslU binding. In terms of biological role, protease subunit of a proteasome-like degradation complex believed to be a general protein degrading machinery. This chain is ATP-dependent protease subunit HslV, found in Carboxydothermus hydrogenoformans (strain ATCC BAA-161 / DSM 6008 / Z-2901).